The primary structure comprises 428 residues: Trigger factor (428 aa).

Positions 163–248 (GDMVIIDYKG…IHEIKEKEVP (86 aa)) constitute a PPIase FKBP-type domain.

This sequence belongs to the FKBP-type PPIase family. Tig subfamily.

It localises to the cytoplasm. The enzyme catalyses [protein]-peptidylproline (omega=180) = [protein]-peptidylproline (omega=0). Functionally, involved in protein export. Acts as a chaperone by maintaining the newly synthesized protein in an open conformation. Functions as a peptidyl-prolyl cis-trans isomerase. The protein is Trigger factor of Alkaliphilus oremlandii (strain OhILAs) (Clostridium oremlandii (strain OhILAs)).